A 460-amino-acid polypeptide reads, in one-letter code: Ribosomal protein uS12 methylthiotransferase RimO (460 aa).

Residues 16 to 130 (NKIHFISLGC…ILSAIESKEA (115 aa)) enclose the MTTase N-terminal domain. The [4Fe-4S] cluster site is built by Cys25, Cys61, Cys93, Cys164, Cys168, and Cys171. In terms of domain architecture, Radical SAM core spans 150-382 (STPKHYAYLK…SQTQKKNVEK (233 aa)). One can recognise a TRAM domain in the interval 385-455 (KQLVGQIVEA…GYDLVGRVIK (71 aa)).

It belongs to the methylthiotransferase family. RimO subfamily. Requires [4Fe-4S] cluster as cofactor.

Its subcellular location is the cytoplasm. It catalyses the reaction L-aspartate(89)-[ribosomal protein uS12]-hydrogen + (sulfur carrier)-SH + AH2 + 2 S-adenosyl-L-methionine = 3-methylsulfanyl-L-aspartate(89)-[ribosomal protein uS12]-hydrogen + (sulfur carrier)-H + 5'-deoxyadenosine + L-methionine + A + S-adenosyl-L-homocysteine + 2 H(+). In terms of biological role, catalyzes the methylthiolation of an aspartic acid residue of ribosomal protein uS12. The sequence is that of Ribosomal protein uS12 methylthiotransferase RimO from Chlamydia caviae (strain ATCC VR-813 / DSM 19441 / 03DC25 / GPIC) (Chlamydophila caviae).